Here is a 329-residue protein sequence, read N- to C-terminus: Peroxidase 50 (329 aa).

The N-terminal stretch at 1-25 (MVVVNKTNLLLLLLSLCLTLDLSSA) is a signal peptide. 4 disulfides stabilise this stretch: C36–C119, C69–C74, C125–C325, and C204–C236. Residue H67 is the Proton acceptor of the active site. 5 residues coordinate Ca(2+): D68, V71, G73, D75, and S77. P167 contributes to the substrate binding site. Residue H197 coordinates heme b. T198 contributes to the Ca(2+) binding site. The N-linked (GlcNAc...) asparagine glycan is linked to N215. The Ca(2+) site is built by D249, T252, and D257.

It belongs to the peroxidase family. Classical plant (class III) peroxidase subfamily. The cofactor is heme b. It depends on Ca(2+) as a cofactor. In terms of tissue distribution, expressed in roots and leaves.

The protein resides in the secreted. The enzyme catalyses 2 a phenolic donor + H2O2 = 2 a phenolic radical donor + 2 H2O. Functionally, removal of H(2)O(2), oxidation of toxic reductants, biosynthesis and degradation of lignin, suberization, auxin catabolism, response to environmental stresses such as wounding, pathogen attack and oxidative stress. These functions might be dependent on each isozyme/isoform in each plant tissue. Exhibits a Ca(2+)-pectate binding affinity which could be interpreted in vivo as a specificity to interact with the pectic structure of the cell wall. The polypeptide is Peroxidase 50 (PER50) (Arabidopsis thaliana (Mouse-ear cress)).